We begin with the raw amino-acid sequence, 474 residues long: Replication-associated protein (474 aa).

The Nuclear localization signal motif lies at 248–255 (GKRFQEDR). The segment at 455–474 (AFAPGFSLTSEPEPKRRRFF) is disordered.

It localises to the host nucleus. Plays an essential for the replication of viral DNA. Presumably cleaves viral genomic dsRNA replicative form to initiate rolling circle replication. This Avon-Heathcote Estuary associated kieseladnavirus (AHEaBV) protein is Replication-associated protein.